The sequence spans 357 residues: Pheromone receptor 1 (357 aa).

A run of 7 helical transmembrane segments spans residues 5-25 (ITPF…AWHI), 32-52 (LIML…NSMV), 67-90 (LSVR…ARKL), 110-130 (VIID…LMIV), 145-165 (WPMM…VIVV), 206-226 (LLLL…GTIA), and 268-288 (LILA…MFGL). Positions 338–357 (ANTSTKSEKSDIDMRGSEAA) are disordered. Residues 343-357 (KSEKSDIDMRGSEAA) are compositionally biased toward basic and acidic residues.

Belongs to the G-protein coupled receptor 4 family.

The protein resides in the membrane. Functionally, receptor for the A2 pheromone, a prenylated mating factor. In Mycosarcoma maydis (Corn smut fungus), this protein is Pheromone receptor 1 (PRA1).